The primary structure comprises 451 residues: L,D-transpeptidase 5 (451 aa).

Positions 263-384 (QVVKAEVSSH…AVYGDPVEVT (122 aa)) constitute a L,D-TPase catalytic domain. Residues Tyr-323 and 337 to 338 (NG) contribute to the substrate site. His-342 functions as the Proton donor/acceptor in the catalytic mechanism. The active-site Nucleophile is the Cys-360. Position 362 (Asn-362) interacts with substrate. The disordered stretch occupies residues 417-451 (AAKPAATQIPVTAPVTPSDAPTPSGTPTTTNGPGG). Residues 437-451 (PTPSGTPTTTNGPGG) show a composition bias toward low complexity.

It functions in the pathway cell wall biogenesis; peptidoglycan biosynthesis. With respect to regulation, in contrast to other LDT paralogs, LdtMt5 is not inactivated by the beta-lactam carbapenems; beta-lactam carbapenems form covalent adducts with other LDT paralogs but the formation of covalent adducts was not detected for LdtMt5. Functionally, generates 3-&gt;3 cross-links in peptidoglycan, catalyzing the cleavage of the mDap(3)-D-Ala(4) bond of a tetrapeptide donor stem and the formation of a bond between the carbonyl of mDap(3) of the donor stem and the side chain of mDap(3) of the acceptor stem. Is specific for donor substrates containing a stem tetrapeptide since it cannot use pentapeptide stems. This is L,D-transpeptidase 5 (lprQ) from Mycobacterium tuberculosis (strain ATCC 25618 / H37Rv).